The primary structure comprises 126 residues: Histone H2B type 1-M (126 aa).

Residues 1–36 are disordered; the sequence is MPEPVKSAPVPKKGSKKAINKAQKKDGKKRKRSRKE. Residue Pro2 is modified to N-acetylproline. Glu3 bears the ADP-ribosyl glutamic acid mark. The residue at position 6 (Lys6) is an N6-(2-hydroxyisobutyryl)lysine; alternate. Lys6 is modified (N6-(beta-hydroxybutyryl)lysine; alternate). Lys6 carries the N6-acetyllysine; alternate modification. Lys6 bears the N6-butyryllysine; alternate mark. Lys6 bears the N6-crotonyllysine; alternate mark. At Lys6 the chain carries N6-lactoyllysine; alternate. Lys6 is covalently cross-linked (Glycyl lysine isopeptide (Lys-Gly) (interchain with G-Cter in SUMO2); alternate). Ser7 is subject to ADP-ribosylserine. The residue at position 12 (Lys12) is an N6-(beta-hydroxybutyryl)lysine; alternate. 2 positions are modified to N6-acetyllysine; alternate: Lys12 and Lys13. Residues Lys12 and Lys13 each carry the N6-crotonyllysine; alternate modification. Residue Lys12 is modified to N6-lactoyllysine; alternate. Lys13 carries the post-translational modification N6-(2-hydroxyisobutyryl)lysine; alternate. The residue at position 15 (Ser15) is a Phosphoserine; by STK4/MST1. Residues Lys16, Lys17, Lys21, and Lys24 each carry the N6-acetyllysine; alternate modification. An N6-crotonyllysine; alternate mark is found at Lys16, Lys17, Lys21, and Lys24. 4 positions are modified to N6-lactoyllysine; alternate: Lys16, Lys17, Lys21, and Lys24. N6-(beta-hydroxybutyryl)lysine; alternate is present on residues Lys17 and Lys21. Lys17 carries the N6-glutaryllysine; alternate modification. An N6-(2-hydroxyisobutyryl)lysine; alternate mark is found at Lys21 and Lys24. Residue Lys21 is modified to N6-butyryllysine; alternate. Lys21 participates in a covalent cross-link: Glycyl lysine isopeptide (Lys-Gly) (interchain with G-Cter in SUMO2); alternate. Lys25 is subject to N6-(2-hydroxyisobutyryl)lysine. Lys35 carries the N6-(2-hydroxyisobutyryl)lysine; alternate modification. N6-(beta-hydroxybutyryl)lysine; alternate is present on Lys35. Lys35 is subject to N6-crotonyllysine; alternate. An N6-glutaryllysine; alternate modification is found at Lys35. N6-succinyllysine; alternate is present on Lys35. A Glycyl lysine isopeptide (Lys-Gly) (interchain with G-Cter in ubiquitin); alternate cross-link involves residue Lys35. Glu36 carries the post-translational modification PolyADP-ribosyl glutamic acid. Ser37 carries the phosphoserine; by AMPK modification. 3 positions are modified to N6-(2-hydroxyisobutyryl)lysine; alternate: Lys44, Lys47, and Lys58. Lys44 is subject to N6-lactoyllysine; alternate. Lys44 and Lys47 each carry N6-glutaryllysine; alternate. At Lys47 the chain carries N6-methyllysine; alternate. Lys58 is modified (N6,N6-dimethyllysine; alternate). The residue at position 80 (Arg80) is a Dimethylated arginine. N6-(2-hydroxyisobutyryl)lysine; alternate is present on Lys86. Lys86 carries the N6-(beta-hydroxybutyryl)lysine; alternate modification. The residue at position 86 (Lys86) is an N6-acetyllysine; alternate. Lys86 carries the post-translational modification N6-lactoyllysine; alternate. Position 86 is an N6,N6,N6-trimethyllysine; alternate (Lys86). Arg87 and Arg93 each carry omega-N-methylarginine. Lys109 is subject to N6-(2-hydroxyisobutyryl)lysine; alternate. Lys109 carries the post-translational modification N6-lactoyllysine; alternate. N6-glutaryllysine; alternate is present on Lys109. N6-methyllysine; alternate is present on Lys109. Residue Ser113 is glycosylated (O-linked (GlcNAc) serine). Phosphothreonine is present on Thr116. N6-(2-hydroxyisobutyryl)lysine; alternate occurs at positions 117 and 121. 2 positions are modified to N6-(beta-hydroxybutyryl)lysine; alternate: Lys117 and Lys121. N6-lactoyllysine; alternate is present on residues Lys117 and Lys121. An N6-glutaryllysine; alternate mark is found at Lys117 and Lys121. An N6-succinyllysine; alternate mark is found at Lys117 and Lys121. Lys117 carries the N6-malonyllysine; alternate modification. Lys117 carries the N6-methylated lysine; alternate modification. A Glycyl lysine isopeptide (Lys-Gly) (interchain with G-Cter in ubiquitin); alternate cross-link involves residue Lys121.

Belongs to the histone H2B family. The nucleosome is a histone octamer containing two molecules each of H2A, H2B, H3 and H4 assembled in one H3-H4 heterotetramer and two H2A-H2B heterodimers. The octamer wraps approximately 147 bp of DNA. Post-translationally, monoubiquitination at Lys-35 (H2BK34Ub) by the MSL1/MSL2 dimer is required for histone H3 'Lys-4' (H3K4me) and 'Lys-79' (H3K79me) methylation and transcription activation at specific gene loci, such as HOXA9 and MEIS1 loci. Similarly, monoubiquitination at Lys-121 (H2BK120Ub) by the RNF20/40 complex gives a specific tag for epigenetic transcriptional activation and is also prerequisite for histone H3 'Lys-4' and 'Lys-79' methylation. It also functions cooperatively with the FACT dimer to stimulate elongation by RNA polymerase II. H2BK120Ub also acts as a regulator of mRNA splicing: deubiquitination by USP49 is required for efficient cotranscriptional splicing of a large set of exons. In terms of processing, phosphorylation at Ser-37 (H2BS36ph) by AMPK in response to stress promotes transcription. Phosphorylated on Ser-15 (H2BS14ph) by STK4/MST1 during apoptosis; which facilitates apoptotic chromatin condensation. Also phosphorylated on Ser-15 in response to DNA double strand breaks (DSBs), and in correlation with somatic hypermutation and immunoglobulin class-switch recombination. GlcNAcylation at Ser-113 promotes monoubiquitination of Lys-121. It fluctuates in response to extracellular glucose, and associates with transcribed genes. Post-translationally, ADP-ribosylated by PARP1 or PARP2 on Ser-7 (H2BS6ADPr) in response to DNA damage. H2BS6ADPr promotes recruitment of CHD1L. Mono-ADP-ribosylated on Glu-3 (H2BE2ADPr) by PARP3 in response to single-strand breaks. Poly ADP-ribosylation on Glu-36 (H2BE35ADPr) by PARP1 regulates adipogenesis: it inhibits phosphorylation at Ser-37 (H2BS36ph), thereby blocking expression of pro-adipogenetic genes. In terms of processing, crotonylation (Kcr) is specifically present in male germ cells and marks testis-specific genes in post-meiotic cells, including X-linked genes that escape sex chromosome inactivation in haploid cells. Crotonylation marks active promoters and enhancers and confers resistance to transcriptional repressors. It is also associated with post-meiotically activated genes on autosomes. Lactylated in macrophages by EP300/P300 by using lactoyl-CoA directly derived from endogenous or exogenous lactate, leading to stimulates gene transcription.

It is found in the nucleus. Its subcellular location is the chromosome. Its function is as follows. Core component of nucleosome. Nucleosomes wrap and compact DNA into chromatin, limiting DNA accessibility to the cellular machineries which require DNA as a template. Histones thereby play a central role in transcription regulation, DNA repair, DNA replication and chromosomal stability. DNA accessibility is regulated via a complex set of post-translational modifications of histones, also called histone code, and nucleosome remodeling. The chain is Histone H2B type 1-M from Homo sapiens (Human).